The primary structure comprises 104 residues: Large ribosomal subunit protein bL21c (104 aa).

This sequence belongs to the bacterial ribosomal protein bL21 family. In terms of assembly, part of the 50S ribosomal subunit.

Its subcellular location is the plastid. The protein resides in the chloroplast. In terms of biological role, this protein binds to 23S rRNA. This chain is Large ribosomal subunit protein bL21c, found in Porphyra purpurea (Red seaweed).